The following is a 316-amino-acid chain: Glutathione synthetase (316 aa).

Positions 124 to 311 (NEKLAALLFP…IAGLLFDAIE (188 aa)) constitute an ATP-grasp domain. 151 to 208 (FVLEHGQAVLKPLDGMGGRSIFRSGSGDPNLNVILETLTDGNRKLTLAQRFIPDITAG) is an ATP binding site. Positions 282 and 284 each coordinate Mg(2+).

Belongs to the prokaryotic GSH synthase family. Requires Mg(2+) as cofactor. The cofactor is Mn(2+).

The catalysed reaction is gamma-L-glutamyl-L-cysteine + glycine + ATP = glutathione + ADP + phosphate + H(+). Its pathway is sulfur metabolism; glutathione biosynthesis; glutathione from L-cysteine and L-glutamate: step 2/2. This Xanthomonas axonopodis pv. citri (strain 306) protein is Glutathione synthetase.